The primary structure comprises 340 residues: S-adenosylmethionine:tRNA ribosyltransferase-isomerase (340 aa).

It belongs to the QueA family. As to quaternary structure, monomer.

The protein resides in the cytoplasm. It carries out the reaction 7-aminomethyl-7-carbaguanosine(34) in tRNA + S-adenosyl-L-methionine = epoxyqueuosine(34) in tRNA + adenine + L-methionine + 2 H(+). It functions in the pathway tRNA modification; tRNA-queuosine biosynthesis. Its function is as follows. Transfers and isomerizes the ribose moiety from AdoMet to the 7-aminomethyl group of 7-deazaguanine (preQ1-tRNA) to give epoxyqueuosine (oQ-tRNA). This Macrococcus caseolyticus (strain JCSC5402) (Macrococcoides caseolyticum) protein is S-adenosylmethionine:tRNA ribosyltransferase-isomerase.